The following is a 541-amino-acid chain: Chaperonin GroEL (541 aa).

ATP-binding positions include 29–32, 86–90, Gly-413, 480–482, and Asp-496; these read TLGP, DGTTT, and NAA.

This sequence belongs to the chaperonin (HSP60) family. Forms a cylinder of 14 subunits composed of two heptameric rings stacked back-to-back. Interacts with the co-chaperonin GroES.

It localises to the cytoplasm. The enzyme catalyses ATP + H2O + a folded polypeptide = ADP + phosphate + an unfolded polypeptide.. Functionally, together with its co-chaperonin GroES, plays an essential role in assisting protein folding. The GroEL-GroES system forms a nano-cage that allows encapsulation of the non-native substrate proteins and provides a physical environment optimized to promote and accelerate protein folding. This is Chaperonin GroEL from Gardnerella vaginalis.